The primary structure comprises 706 residues: Elongation factor G (706 aa).

Positions 15–291 (LKTRNIGISA…GVLDYLASPV (277 aa)) constitute a tr-type G domain. GTP is bound by residues 24–31 (AHIDSGKT), 91–95 (DTPGH), and 145–148 (NKLD).

It belongs to the TRAFAC class translation factor GTPase superfamily. Classic translation factor GTPase family. EF-G/EF-2 subfamily.

It is found in the cytoplasm. Functionally, catalyzes the GTP-dependent ribosomal translocation step during translation elongation. During this step, the ribosome changes from the pre-translocational (PRE) to the post-translocational (POST) state as the newly formed A-site-bound peptidyl-tRNA and P-site-bound deacylated tRNA move to the P and E sites, respectively. Catalyzes the coordinated movement of the two tRNA molecules, the mRNA and conformational changes in the ribosome. The chain is Elongation factor G from Leptospira borgpetersenii serovar Hardjo-bovis (strain JB197).